The chain runs to 258 residues: Imidazole glycerol phosphate synthase subunit HisF (258 aa).

Residues D11 and D130 contribute to the active site.

Belongs to the HisA/HisF family. As to quaternary structure, heterodimer of HisH and HisF.

Its subcellular location is the cytoplasm. The enzyme catalyses 5-[(5-phospho-1-deoxy-D-ribulos-1-ylimino)methylamino]-1-(5-phospho-beta-D-ribosyl)imidazole-4-carboxamide + L-glutamine = D-erythro-1-(imidazol-4-yl)glycerol 3-phosphate + 5-amino-1-(5-phospho-beta-D-ribosyl)imidazole-4-carboxamide + L-glutamate + H(+). It functions in the pathway amino-acid biosynthesis; L-histidine biosynthesis; L-histidine from 5-phospho-alpha-D-ribose 1-diphosphate: step 5/9. IGPS catalyzes the conversion of PRFAR and glutamine to IGP, AICAR and glutamate. The HisF subunit catalyzes the cyclization activity that produces IGP and AICAR from PRFAR using the ammonia provided by the HisH subunit. This chain is Imidazole glycerol phosphate synthase subunit HisF, found in Pectobacterium carotovorum subsp. carotovorum (strain PC1).